Reading from the N-terminus, the 178-residue chain is MPLSLRLSPSPTALSPTTGGFGPSRKQCRIPYSGVPTTKIGFCSLDSRKRGDSSVVRCSLETVNVSVGQVTEVDKDTFWPIVKAAGEKLVVLDMYTQWCGPCKVIAPKYKALSEKYDDVVFLKLDCNPDNRPLAKELGIRVVPTFKILKDNKVVKEVTGAKYDDLVAAIETARSAASG.

The tract at residues 1 to 22 is disordered; it reads MPLSLRLSPSPTALSPTTGGFG. A chloroplast-targeting transit peptide spans 1–57; it reads MPLSLRLSPSPTALSPTTGGFGPSRKQCRIPYSGVPTTKIGFCSLDSRKRGDSSVVR. The span at 7–18 shows a compositional bias: polar residues; that stretch reads LSPSPTALSPTT. The 117-residue stretch at 58 to 174 folds into the Thioredoxin domain; that stretch reads CSLETVNVSV…LVAAIETARS (117 aa). Catalysis depends on nucleophile residues cysteine 99 and cysteine 102. The cysteines at positions 99 and 102 are disulfide-linked. Cysteine 126 is modified (S-glutathionyl cysteine; transient).

This sequence belongs to the thioredoxin family. Plant F-type subfamily. In terms of processing, glutathionylation at Cys-126 decreases its ability to be reduced by ferredoxin-thioredoxin reductase and reduces its efficiency in activating target chloroplastic enzymes.

Its subcellular location is the plastid. The protein localises to the chloroplast stroma. Functionally, thiol-disulfide oxidoreductase involved in the redox regulation of enzymes of both reductive pentose phosphate pathway (Calvin-Benson cycle) and oxidative pentose phosphate pathway. Under light or reducing conditions, activates in chloroplast the glyceraldehyde-3-phosphate dehydrogenase, the phosphoribulokinase and the fructose-1,6-bisphosphate phosphatase, and inhibits the glucose-6-phosphate dehydrogenase. This is Thioredoxin F1, chloroplastic from Arabidopsis thaliana (Mouse-ear cress).